The chain runs to 358 residues: DNA methyltransferase CcrM (358 aa).

The segment at methionine 1 to aspartate 260 is methyltransferase. 2 consecutive DNA-binding regions (target strand DNA) follow at residues aspartate 31–tyrosine 34 and glycine 39–proline 45. 2 DNA-binding regions (non-target strand DNA) span residues tyrosine 93–histidine 94 and tryptophan 109–isoleucine 110. Residue histidine 94 coordinates dsDNA. The segment at residues methionine 122–asparagine 132 is a DNA-binding region (target strand DNA). A DNA-binding region (non-target strand DNA) is located at residues tyrosine 153–lysine 157. 2 residues coordinate dsDNA: glutamine 164 and arginine 179. The target strand DNA DNA-binding region spans lysine 187–lysine 193. The 97-residue stretch at glutamate 259–alanine 355 folds into the RAMA domain. The tract at residues leucine 261–glutamate 270 is linker. Residues lysine 267 and arginine 272 each coordinate dsDNA. A non-specific DNA-binding region spans residues arginine 272 to asparagine 358. 2 DNA-binding regions (non-target strand DNA) span residues serine 315–histidine 317 and asparagine 330–tryptophan 332. Arginine 350 is a dsDNA binding site.

Belongs to the N(4)/N(6)-methyltransferase family. In terms of assembly, homodimer. In terms of processing, rapidly degraded by Lon protease prior to cell division.

It catalyses the reaction a 2'-deoxyadenosine in DNA + S-adenosyl-L-methionine = an N(6)-methyl-2'-deoxyadenosine in DNA + S-adenosyl-L-homocysteine + H(+). Its function is as follows. A beta subtype methylase that recognizes the double-stranded sequence 5'-GANTC-3' and methylates non-modifed A-2 on the hemimethylated, post-replicative DNA. Opens a bubble in the DNA at the recognition site, allowing precise recognition of the sequence and ensuring enzyme specificity. Functions only in the predivisional cell. Responsible for 5'-GANTC-3' methylation in the cell; methylation of hemimethylated sites generated after replication fork passage occurs late in the predivisional cell, near completion of chromosome replication but prior to cell division. Contributes to the accurate cell-cycle control of DNA replication and cellular morphology. The polypeptide is DNA methyltransferase CcrM (ccrMIM) (Caulobacter vibrioides (strain ATCC 19089 / CIP 103742 / CB 15) (Caulobacter crescentus)).